The following is a 207-amino-acid chain: NADH-quinone oxidoreductase subunit C (207 aa).

This sequence belongs to the complex I 30 kDa subunit family. As to quaternary structure, NDH-1 is composed of 14 different subunits. Subunits NuoB, C, D, E, F, and G constitute the peripheral sector of the complex.

The protein resides in the cell inner membrane. The enzyme catalyses a quinone + NADH + 5 H(+)(in) = a quinol + NAD(+) + 4 H(+)(out). NDH-1 shuttles electrons from NADH, via FMN and iron-sulfur (Fe-S) centers, to quinones in the respiratory chain. The immediate electron acceptor for the enzyme in this species is believed to be ubiquinone. Couples the redox reaction to proton translocation (for every two electrons transferred, four hydrogen ions are translocated across the cytoplasmic membrane), and thus conserves the redox energy in a proton gradient. In Jannaschia sp. (strain CCS1), this protein is NADH-quinone oxidoreductase subunit C.